A 279-amino-acid polypeptide reads, in one-letter code: uncharacterized protein (279 aa).

The N-terminal stretch at 1–21 (MKIIRTLFLLLIAVYGSSVVA) is a signal peptide.

It to E.coli YfcO.

This is an uncharacterized protein from Salmonella typhimurium (strain LT2 / SGSC1412 / ATCC 700720).